The sequence spans 339 residues: Photosystem II assembly lipoprotein Ycf48 (339 aa).

The signal sequence occupies residues 1-22; that stretch reads MVIVKSWQKIFTLLVVLLLCIG. Cys-23 is lipidated: N-palmitoyl cysteine. Cys-23 carries the S-diacylglycerol cysteine lipid modification.

It belongs to the Ycf48 family. Part of early PSII assembly complexes which includes D1 (psbA) and PsbI; not found in mature PSII. Binds to the lumenal side of PSII complexes. Interacts with YidC.

It localises to the cellular thylakoid membrane. Functionally, a factor required for optimal assembly of photosystem II (PSII), acting in the early stages of PSII assembly. Also plays a role in replacement of photodamaged D1 (psbA). Assists YidC in synthesis of chlorophyll-binding proteins. This chain is Photosystem II assembly lipoprotein Ycf48, found in Nostoc sp. (strain PCC 7120 / SAG 25.82 / UTEX 2576).